The primary structure comprises 247 residues: 14-3-3 protein gamma (247 aa).

It belongs to the 14-3-3 family. As to quaternary structure, homodimer, and heterodimer with other family members.

Its subcellular location is the cytoplasm. Adapter protein implicated in the regulation of a large spectrum of both general and specialized signaling pathways. Binds to a large number of partners, usually by recognition of a phosphoserine or phosphothreonine motif. Binding generally results in the modulation of the activity of the binding partner. This Gallus gallus (Chicken) protein is 14-3-3 protein gamma (YWHAG).